The chain runs to 162 residues: Phospholipase A and acyltransferase 3 (162 aa).

The Cytoplasmic segment spans residues 1–133 (MLAPIPEPKP…VPRSDQVRDA (133 aa)). An LRAT domain is found at 13–129 (LIEIFRPMYR…LRYGVPRSDQ (117 aa)). Active-site residues include His-23 and His-35. The active-site Acyl-thioester intermediate is Cys-113. The helical transmembrane segment at 134–154 (VKAVGIAGVGLAALGLVGVML) threads the bilayer. The Lumenal segment spans residues 155–162 (SRNKKQKQ).

This sequence belongs to the H-rev107 family. As to quaternary structure, interacts with PPP2R1A; this interaction might decrease PP2A activity. As to expression, ubiquitously expressed in normal tissues but down-regulated in primary carcinomas or in many cell lines derived from tumors. Highly expressed in white adipose tissue and in adipocytes. Expressed at lower levels in brown adipose tissue.

The protein localises to the cell membrane. Its subcellular location is the cytoplasm. It is found in the cytosol. It localises to the perinuclear region. The protein resides in the peroxisome membrane. The protein localises to the mitochondrion membrane. Its subcellular location is the nucleus envelope. It is found in the lysosome membrane. It localises to the endoplasmic reticulum membrane. It carries out the reaction a 1,2-diacyl-sn-glycero-3-phosphocholine + H2O = a 1-acyl-sn-glycero-3-phosphocholine + a fatty acid + H(+). The catalysed reaction is a 1,2-diacyl-sn-glycero-3-phosphocholine + H2O = a 2-acyl-sn-glycero-3-phosphocholine + a fatty acid + H(+). It catalyses the reaction 1,2-dihexadecanoyl-sn-glycero-3-phosphocholine + H2O = 1-hexadecanoyl-sn-glycero-3-phosphocholine + hexadecanoate + H(+). The enzyme catalyses 1,2-dihexadecanoyl-sn-glycero-3-phosphocholine + H2O = 2-hexadecanoyl-sn-glycero-3-phosphocholine + hexadecanoate + H(+). It carries out the reaction 1-hexadecanoyl-2-(9Z-octadecenoyl)-sn-glycero-3-phosphocholine + H2O = 2-(9Z-octadecenoyl)-sn-glycero-3-phosphocholine + hexadecanoate + H(+). The catalysed reaction is 1-hexadecanoyl-2-(9Z-octadecenoyl)-sn-glycero-3-phosphocholine + H2O = 1-hexadecanoyl-sn-glycero-3-phosphocholine + (9Z)-octadecenoate + H(+). It catalyses the reaction 1-hexadecanoyl-2-(5Z,8Z,11Z,14Z-eicosatetraenoyl)-sn-glycero-3-phosphocholine + H2O = 1-hexadecanoyl-sn-glycero-3-phosphocholine + (5Z,8Z,11Z,14Z)-eicosatetraenoate + H(+). The enzyme catalyses 1-hexadecanoyl-2-(5Z,8Z,11Z,14Z-eicosatetraenoyl)-sn-glycero-3-phosphocholine + H2O = 2-(5Z,8Z,11Z,14Z)-eicosatetraenoyl-sn-glycero-3-phosphocholine + hexadecanoate + H(+). It carries out the reaction 1-hexadecanoyl-2-(9Z,12Z-octadecadienoyl)-sn-glycero-3-phosphoethanolamine + H2O = 1-hexadecanoyl-sn-glycero-3-phosphoethanolamine + (9Z,12Z)-octadecadienoate + H(+). The catalysed reaction is 1-hexadecanoyl-2-(9Z,12Z-octadecadienoyl)-sn-glycero-3-phosphoethanolamine + H2O = 2-(9Z,12Z)-octadecadienoyl-sn-glycero-3-phosphoethanolamine + hexadecanoate + H(+). It catalyses the reaction 1-hexadecanoyl-2-(5Z,8Z,11Z,14Z-eicosatetraenoyl)-sn-glycero-3-phosphoethanolamine + H2O = 1-hexadecanoyl-sn-glycero-3-phosphoethanolamine + (5Z,8Z,11Z,14Z)-eicosatetraenoate + H(+). The enzyme catalyses 1-hexadecanoyl-2-(5Z,8Z,11Z,14Z-eicosatetraenoyl)-sn-glycero-3-phosphoethanolamine + H2O = 2-(5Z,8Z,11Z,14Z)-eicosatetraenoyl-sn-glycero-3-phosphoethanolamine + hexadecanoate + H(+). It carries out the reaction 1-hexanoyl-2-acyl-sn-glycero-3-phosphocholine + H2O = hexanoate + a 2-acyl-sn-glycero-3-phosphocholine + H(+). The catalysed reaction is 1-hexanoyl-2-acyl-sn-glycero-3-phosphocholine + H2O = 1-hexanoyl-sn-glycero-3-phosphocholine + a fatty acid + H(+). It catalyses the reaction 1,2-diheptadecanoyl-sn-glycero-3-phosphoethanolamine + 1-(9Z-octadecenoyl)-2-hexadecanoyl-sn-glycero-3-phosphocholine = 1,2-diheptadecanoyl-sn-glycero-3-phospho-N-hexadecanoyl-ethanolamine + 1-(9Z-octadecenoyl)-sn-glycero-3-phosphocholine + H(+). The enzyme catalyses 1,2-diheptadecanoyl-sn-glycero-3-phosphoethanolamine + 1-(9Z-octadecenoyl)-2-hexadecanoyl-sn-glycero-3-phosphocholine = 1,2-diheptadecanoyl-sn-glycero-3-phospho-N-(9Z-octadecenoyl)-ethanolamine + 2-hexadecanoyl-sn-glycero-3-phosphocholine + H(+). It carries out the reaction 1,2-dihexanoyl-sn-glycero-3-phosphoethanolamine + 2-heptanoyl-sn-glycero-3-phosphocholine = hexanoyl-sn-glycero-3-phosphoethanolamine + 1-hexanoyl-2-heptanoyl-sn-glycero-3-phosphocholine. The catalysed reaction is 1-hexadecanoyl-2-octadecanoyl-sn-glycero-3-phosphocholine + H2O = octadecanoate + 1-hexadecanoyl-sn-glycero-3-phosphocholine + H(+). It catalyses the reaction 1-hexadecanoyl-2-octadecanoyl-sn-glycero-3-phosphocholine + H2O = 2-octadecanoyl-sn-glycero-3-phosphocholine + hexadecanoate + H(+). The enzyme catalyses 1-octadecanoyl-2-hexadecanoyl-sn-glycero-3-phosphocholine + H2O = 1-octadecanoyl-sn-glycero-3-phosphocholine + hexadecanoate + H(+). It carries out the reaction 1-octadecanoyl-2-hexadecanoyl-sn-glycero-3-phosphocholine + H2O = 2-hexadecanoyl-sn-glycero-3-phosphocholine + octadecanoate + H(+). The catalysed reaction is 1-hexadecanoyl-2-(9Z,12Z-octadecadienoyl)-sn-glycero-3-phosphocholine + H2O = (9Z,12Z)-octadecadienoate + 1-hexadecanoyl-sn-glycero-3-phosphocholine + H(+). It catalyses the reaction 1-hexadecanoyl-2-(9Z,12Z-octadecadienoyl)-sn-glycero-3-phosphocholine + H2O = 2-(9Z,12Z-octadecadienoyl)-sn-glycero-3-phosphocholine + hexadecanoate + H(+). The enzyme catalyses 1,2-di-(9Z-octadecenoyl)-sn-glycero-3-phosphocholine + H2O = 2-(9Z-octadecenoyl)-sn-glycero-3-phosphocholine + (9Z)-octadecenoate + H(+). It carries out the reaction 1,2-dihexadecanoyl-sn-glycero-3-phosphocholine + H2O = hexadecanoyl-sn-glycero-3-phosphocholine + hexadecanoate + H(+). The catalysed reaction is 1,2-di-(9Z-octadecenoyl)-sn-glycero-3-phosphocholine + H2O = 1-(9Z-octadecenoyl)-sn-glycero-3-phosphocholine + (9Z)-octadecenoate + H(+). It catalyses the reaction 1,2-di-(9Z-octadecenoyl)-sn-glycero-3-phosphoethanolamine + 1,2-dihexadecanoyl-sn-glycero-3-phosphocholine = hexadecanoyl-sn-glycero-3-phosphocholine + N-hexadecanoyl-1,2-di-(9Z-octadecenoyl)-sn-glycero-3-phosphoethanolamine + H(+). The enzyme catalyses 1,2-di-(9Z,12Z-octadecadienoyl)-sn-glycero-3-phosphocholine + H2O = 1-(9Z,12Z)-octadecadienoyl-sn-glycero-3-phosphocholine + (9Z,12Z)-octadecadienoate + H(+). Exhibits both phospholipase A1/2 and acyltransferase activities. Shows phospholipase A1 (PLA1) and A2 (PLA2), catalyzing the calcium-independent release of fatty acids from the sn-1 or sn-2 position of glycerophospholipids. For most substrates, PLA1 activity is much higher than PLA2 activity. Shows O-acyltransferase activity, catalyzing the transfer of a fatty acyl group from glycerophospholipid to the hydroxyl group of lysophospholipid. Shows N-acyltransferase activity,catalyzing the calcium-independent transfer of a fatty acyl group at the sn-1 position of phosphatidylcholine (PC) and other glycerophospholipids to the primary amine of phosphatidylethanolamine (PE), forming N-acylphosphatidylethanolamine (NAPE), which serves as precursor for N-acylethanolamines (NAEs). Exhibits high N-acyltransferase activity and low phospholipase A1/2 activity. Required for complete organelle rupture and degradation that occur during eye lens terminal differentiation, when fiber cells that compose the lens degrade all membrane-bound organelles in order to provide lens with transparency to allow the passage of light. Organelle membrane degradation is probably catalyzed by the phospholipase activity. In terms of biological role, (Microbial infection) Acts as a host factor for picornaviruses: required during early infection to promote viral genome release into the cytoplasm. This Mus musculus (Mouse) protein is Phospholipase A and acyltransferase 3.